A 556-amino-acid chain; its full sequence is 2-succinyl-5-enolpyruvyl-6-hydroxy-3-cyclohexene-1-carboxylate synthase (556 aa).

This sequence belongs to the TPP enzyme family. MenD subfamily. As to quaternary structure, homodimer. Mg(2+) is required as a cofactor. It depends on Mn(2+) as a cofactor. Thiamine diphosphate serves as cofactor.

It carries out the reaction isochorismate + 2-oxoglutarate + H(+) = 5-enolpyruvoyl-6-hydroxy-2-succinyl-cyclohex-3-ene-1-carboxylate + CO2. It functions in the pathway quinol/quinone metabolism; 1,4-dihydroxy-2-naphthoate biosynthesis; 1,4-dihydroxy-2-naphthoate from chorismate: step 2/7. The protein operates within quinol/quinone metabolism; menaquinone biosynthesis. Functionally, catalyzes the thiamine diphosphate-dependent decarboxylation of 2-oxoglutarate and the subsequent addition of the resulting succinic semialdehyde-thiamine pyrophosphate anion to isochorismate to yield 2-succinyl-5-enolpyruvyl-6-hydroxy-3-cyclohexene-1-carboxylate (SEPHCHC). The polypeptide is 2-succinyl-5-enolpyruvyl-6-hydroxy-3-cyclohexene-1-carboxylate synthase (Escherichia coli (strain UTI89 / UPEC)).